The sequence spans 441 residues: Maltokinase (441 aa).

Belongs to the aminoglycoside phosphotransferase family. Monomer.

The catalysed reaction is D-maltose + ATP = alpha-maltose 1-phosphate + ADP + H(+). Its pathway is glycan biosynthesis; glycogen biosynthesis. Functionally, catalyzes the ATP-dependent phosphorylation of maltose to maltose 1-phosphate. Is involved in a branched alpha-glucan biosynthetic pathway from trehalose, together with TreS, GlgE and GlgB. The chain is Maltokinase (mak) from Mycolicibacterium vanbaalenii (strain DSM 7251 / JCM 13017 / BCRC 16820 / KCTC 9966 / NRRL B-24157 / PYR-1) (Mycobacterium vanbaalenii).